A 215-amino-acid chain; its full sequence is Protein Thf1 (215 aa).

A coiled-coil region spans residues 182–213 (ERMDQAVELVEETIAAEKRKKERRLEEQAQRT).

Belongs to the THF1 family.

Functionally, may be involved in photosynthetic membrane biogenesis. This chain is Protein Thf1, found in Synechococcus sp. (strain CC9605).